Here is a 128-residue protein sequence, read N- to C-terminus: Glycine cleavage system H protein (128 aa).

The 83-residue stretch at Thr-25 to Lys-107 folds into the Lipoyl-binding domain. Lys-66 is subject to N6-lipoyllysine.

This sequence belongs to the GcvH family. In terms of assembly, the glycine cleavage system is composed of four proteins: P, T, L and H. The cofactor is (R)-lipoate.

In terms of biological role, the glycine cleavage system catalyzes the degradation of glycine. The H protein shuttles the methylamine group of glycine from the P protein to the T protein. The polypeptide is Glycine cleavage system H protein (Neisseria meningitidis serogroup B (strain ATCC BAA-335 / MC58)).